The chain runs to 320 residues: Dual oxidase maturation factor 2 (320 aa).

At 1–21 (MTLWNGVLPFYPQPRHAAGFS) the chain is on the extracellular side. The helical transmembrane segment at 22-42 (VPLLIVILVFLALAASFLLIL) threads the bilayer. The Cytoplasmic segment spans residues 43–56 (PGIRGHSRWFWLVR). The helical transmembrane segment at 57–77 (VLLSLFIGAEIVAVHFSAEWF) threads the bilayer. At 78–183 (VGTVNTNTSY…HLAGHYASAT (106 aa)) the chain is on the extracellular side. N-linked (GlcNAc...) asparagine glycosylation is found at N84, N109, and N121. A helical transmembrane segment spans residues 184-204 (LWVAFCFWLLSNVLLSTPAPL). Over 205–206 (YG) the chain is Cytoplasmic. A helical transmembrane segment spans residues 207–227 (GLALLTTGAFALFGVFALASI). Residues 228–247 (SSVPLCPLRLGSSALTTQYG) are Extracellular-facing. Residues 248 to 268 (AAFWVTLATGVLCLFLGGAVV) traverse the membrane as a helical segment. Residues 269-320 (SLQYVRPSALRTLLDQSAKDCSQERGGSPLILGDPLHKQAALPDLKCITTNL) are Cytoplasmic-facing.

Belongs to the DUOXA family. In terms of assembly, heterodimer with DUXA2; disulfide-linked. Interacts with CSNK1G2. N-glycosylated. In terms of tissue distribution, specifically expressed in thyroid. Also detected in salivary glands.

It is found in the endoplasmic reticulum membrane. Required for the maturation and the transport from the endoplasmic reticulum to the plasma membrane of functional DUOX2. May play a role in thyroid hormone synthesis. This chain is Dual oxidase maturation factor 2 (DUOXA2), found in Homo sapiens (Human).